Reading from the N-terminus, the 80-residue chain is Acyl carrier protein (80 aa).

Positions 4-79 (EEIKDKVFDI…QAIDYIVNAK (76 aa)) constitute a Carrier domain. Residue serine 39 is modified to O-(pantetheine 4'-phosphoryl)serine.

Belongs to the acyl carrier protein (ACP) family. Post-translationally, 4'-phosphopantetheine is transferred from CoA to a specific serine of apo-ACP by AcpS. This modification is essential for activity because fatty acids are bound in thioester linkage to the sulfhydryl of the prosthetic group.

The protein resides in the cytoplasm. It functions in the pathway lipid metabolism; fatty acid biosynthesis. Functionally, carrier of the growing fatty acid chain in fatty acid biosynthesis. This Prosthecochloris aestuarii (strain DSM 271 / SK 413) protein is Acyl carrier protein.